The primary structure comprises 417 residues: MSLSNKLTLDKVDVKGKRVVMRVDFNVPMKDHKITNNQRIKAAVPTIKHCLDHGAKSVVLMSHLGRPDGVPMPDKFSFSPVAVELKALLGREVSFLKDCVGPEVEKACANPANGSVILLENLRFHVEEEGKGKDASGNKIKADAAKVEAFRASLSKLGDVYVNDAFGTAHRAHSSMVGVHLPQKAAGFLMKKELDYFAKALESPERPFLAILGGAKVQDKIQLISNMLDKVNEMIIGGGMAFTFLKVLNNMQIGNSLFDEEGSKIVKDLMAKAEKNGVKITLPVDFITADKFDEHAQTGEATVASGIPAGWMGLDCGPESVKKFVEVVGRAKQIVWNGPVGVFEWDKFSKGTKALMDKVVEVTGKGCITIIGGGDTATCCAKWNTEDKVSHVSTGGGASLELLEGKVLPGVDALSSV.

Positions 23, 24, 25, 26, 38, 39, 62, 63, 65, 66, 122, 123, 170, and 171 each coordinate (2R)-3-phosphoglycerate. Position 214 (G214) interacts with ADP. A CDP-binding site is contributed by G214. AMP-binding residues include A215 and K216. Residue A215 coordinates ATP. Residue A215 participates in Mg(2+) binding. D219 is a binding site for CDP. D219 is a Mg(2+) binding site. K220 is an AMP binding site. K220 serves as a coordination point for ATP. Residue G238 coordinates ADP. Position 238 (G238) interacts with CDP. AMP contacts are provided by G239 and G313. Residues G239 and G313 each contribute to the ATP site. CDP contacts are provided by G338, V340, and F343. Residue F343 coordinates ADP. AMP is bound at residue E344. ATP-binding residues include E344, D375, and T376. Residue D375 participates in Mg(2+) binding.

The protein belongs to the phosphoglycerate kinase family. Monomer. It depends on Mg(2+) as a cofactor.

Its subcellular location is the cytoplasm. It catalyses the reaction (2R)-3-phosphoglycerate + ATP = (2R)-3-phospho-glyceroyl phosphate + ADP. Its pathway is carbohydrate degradation; glycolysis; pyruvate from D-glyceraldehyde 3-phosphate: step 2/5. Functionally, catalyzes one of the two ATP producing reactions in the glycolytic pathway via the reversible conversion of 1,3-diphosphoglycerate to 3-phosphoglycerate. In addition to its role as a glycolytic enzyme, it seems that PGK-1 acts as a polymerase alpha cofactor protein (primer recognition protein). May play a role in sperm motility. The chain is Phosphoglycerate kinase (PGK) from Gallus gallus (Chicken).